Consider the following 602-residue polypeptide: DNA mismatch repair protein MutL (602 aa).

It belongs to the DNA mismatch repair MutL/HexB family.

This protein is involved in the repair of mismatches in DNA. It is required for dam-dependent methyl-directed DNA mismatch repair. May act as a 'molecular matchmaker', a protein that promotes the formation of a stable complex between two or more DNA-binding proteins in an ATP-dependent manner without itself being part of a final effector complex. In Geotalea uraniireducens (strain Rf4) (Geobacter uraniireducens), this protein is DNA mismatch repair protein MutL.